The sequence spans 434 residues: Enolase (434 aa).

Gln165 contacts (2R)-2-phosphoglycerate. The active-site Proton donor is Glu207. 3 residues coordinate Mg(2+): Asp244, Glu291, and Asp318. The (2R)-2-phosphoglycerate site is built by Lys343, Arg372, Ser373, and Lys394. Residue Lys343 is the Proton acceptor of the active site.

The protein belongs to the enolase family. The cofactor is Mg(2+).

The protein resides in the cytoplasm. Its subcellular location is the secreted. It is found in the cell surface. The enzyme catalyses (2R)-2-phosphoglycerate = phosphoenolpyruvate + H2O. The protein operates within carbohydrate degradation; glycolysis; pyruvate from D-glyceraldehyde 3-phosphate: step 4/5. Catalyzes the reversible conversion of 2-phosphoglycerate (2-PG) into phosphoenolpyruvate (PEP). It is essential for the degradation of carbohydrates via glycolysis. The chain is Enolase from Staphylococcus saprophyticus subsp. saprophyticus (strain ATCC 15305 / DSM 20229 / NCIMB 8711 / NCTC 7292 / S-41).